The following is a 558-amino-acid chain: Glutamine--tRNA ligase (558 aa).

A 'HIGH' region motif is present at residues 34-44 (PEPNGYLHIGH). ATP contacts are provided by residues 35-37 (EPN) and 41-47 (HIGHAKS). 2 residues coordinate L-glutamine: aspartate 67 and tyrosine 212. Residues threonine 231, 261 to 262 (RL), and 269 to 271 (LSK) contribute to the ATP site. Residues 268-272 (VLSKR) carry the 'KMSKS' region motif.

It belongs to the class-I aminoacyl-tRNA synthetase family. In terms of assembly, monomer.

It is found in the cytoplasm. The catalysed reaction is tRNA(Gln) + L-glutamine + ATP = L-glutaminyl-tRNA(Gln) + AMP + diphosphate. The sequence is that of Glutamine--tRNA ligase from Pseudoalteromonas atlantica (strain T6c / ATCC BAA-1087).